Reading from the N-terminus, the 306-residue chain is Agmatinase (306 aa).

Residues His126, Asp149, His151, Asp153, Asp230, and Asp232 each contribute to the Mn(2+) site.

It belongs to the arginase family. Agmatinase subfamily. Mn(2+) serves as cofactor.

It catalyses the reaction agmatine + H2O = urea + putrescine. The protein operates within amine and polyamine biosynthesis; putrescine biosynthesis via agmatine pathway; putrescine from agmatine: step 1/1. In terms of biological role, catalyzes the formation of putrescine from agmatine. In Enterobacter sp. (strain 638), this protein is Agmatinase.